A 44-amino-acid polypeptide reads, in one-letter code: Large ribosomal subunit protein bL34 (44 aa).

The disordered stretch occupies residues 1-26; sequence MQRTLGGTNRKRKRTSGFRARMRTPD. Residues 9-22 are compositionally biased toward basic residues; sequence NRKRKRTSGFRARM.

Belongs to the bacterial ribosomal protein bL34 family.

This chain is Large ribosomal subunit protein bL34, found in Trichormus variabilis (strain ATCC 29413 / PCC 7937) (Anabaena variabilis).